Here is a 183-residue protein sequence, read N- to C-terminus: uncharacterized protein (183 aa).

This is an uncharacterized protein from Bacillus subtilis (strain 168).